The following is a 156-amino-acid chain: Small ribosomal subunit protein uS7 (156 aa).

This sequence belongs to the universal ribosomal protein uS7 family. Part of the 30S ribosomal subunit. Contacts proteins S9 and S11.

Functionally, one of the primary rRNA binding proteins, it binds directly to 16S rRNA where it nucleates assembly of the head domain of the 30S subunit. Is located at the subunit interface close to the decoding center, probably blocks exit of the E-site tRNA. The protein is Small ribosomal subunit protein uS7 of Nitrosomonas europaea (strain ATCC 19718 / CIP 103999 / KCTC 2705 / NBRC 14298).